The primary structure comprises 589 residues: Lipoprotein LpqB (589 aa).

The signal sequence occupies residues 1–20 (MMRGVLVIMRLLCLGMLFTG). Cys21 carries the N-palmitoyl cysteine lipid modification. Cys21 carries S-diacylglycerol cysteine lipidation.

Belongs to the LpqB lipoprotein family.

It localises to the cell membrane. The polypeptide is Lipoprotein LpqB (Mycobacterium leprae (strain TN)).